Reading from the N-terminus, the 414-residue chain is Secreted beta-glucosidase sun1 (414 aa).

Residues 1–19 form the signal peptide; it reads MKFNTVALTLATAGSLVTA. The N-linked (GlcNAc...) asparagine glycan is linked to Asn80. Positions 115–140 are enriched in low complexity; it reads TSASSSETVQTPAASSSSASSSSTAT. The disordered stretch occupies residues 115-141; it reads TSASSSETVQTPAASSSSASSSSTATG. N-linked (GlcNAc...) asparagine glycosylation occurs at Asn377.

The protein belongs to the SUN family. Post-translationally, highly glycosylated.

It localises to the secreted. The protein localises to the cell wall. In terms of biological role, cell surface beta-glucosidase involved in cell wall biosynthesis and septation, and thus required for normal growth and correct hyphal morphogenesis. Has hydrolytic activity on linear (1-&gt;3)-beta-D-glucans such as laminaribiose and other laminarioligosaccharides. Also has a minor transferase activity. In Aspergillus fumigatus (strain ATCC MYA-4609 / CBS 101355 / FGSC A1100 / Af293) (Neosartorya fumigata), this protein is Secreted beta-glucosidase sun1 (sun1).